We begin with the raw amino-acid sequence, 224 residues long: Germin-like protein 8-10 (224 aa).

The signal sequence occupies residues 1–22; sequence MASPSICLLAALLALVSWQAIA. Residues Cys-32 and Cys-47 are joined by a disulfide bond. The Cupin type-1 domain maps to 62–212; the sequence is AMLDTPRKTN…AFQVEKGTID (151 aa). A glycan (N-linked (GlcNAc...) asparagine) is linked at Asn-76. Residues His-109, His-111, and Glu-116 each coordinate Mn(2+). A glycan (N-linked (GlcNAc...) asparagine) is linked at Asn-135. Mn(2+) is bound at residue His-157.

It belongs to the germin family. As to quaternary structure, oligomer (believed to be a pentamer but probably hexamer).

It localises to the secreted. The protein localises to the extracellular space. Its subcellular location is the apoplast. Its function is as follows. Plays a role in broad-spectrum disease resistance. Probably has no oxalate oxidase activity even if the active site is conserved. The polypeptide is Germin-like protein 8-10 (GLP2) (Oryza sativa subsp. japonica (Rice)).